Consider the following 770-residue polypeptide: Disabled homolog 2 (770 aa).

Residues 1–16 (MSNEVETSATNGQPDQ) are compositionally biased toward polar residues. Residues 1 to 38 (MSNEVETSATNGQPDQQAAPKAPSKKEKKKGPEKTDEY) form a disordered region. N-acetylserine is present on S2. At S2 the chain carries Phosphoserine. The 152-residue stretch at 45-196 (GDGVKYKAKL…KAVENGSEAL (152 aa)) folds into the PID domain. Y170 is modified (phosphotyrosine). S193 is modified (phosphoserine). The tract at residues 230 to 447 (ESKDILLVDL…KPGRGRRTAK (218 aa)) is required for localization to clathrin-coated pits. Disordered regions lie at residues 284-482 (LNFF…LQPN) and 604-629 (VSTQ…AGPP). Short sequence motifs (DPF) lie at residues 293 to 295 (DPF) and 298 to 300 (DPF). Over residues 302–313 (QPDQSTPSSFDS) the composition is skewed to polar residues. S326 and S328 each carry phosphoserine; in mitosis. The segment covering 366-396 (FSSSQTQPAVRTQNGVSEREQNGFSVKSSPN) has biased composition (polar residues). S401 carries the post-translational modification Phosphoserine. 3 stretches are compositionally biased toward polar residues: residues 407–425 (SIQN…SSPH), 466–480 (PSGQ…TALQ), and 604–616 (VSTQ…SSLL). Positions 604-732 (VSTQPPSMHS…SLPVTKSTDN (129 aa)) are sufficient for interaction with GRB2. The interval 619–627 (PPQPPPRAG) is required for interaction with CSK. The interval 649–770 (KDVKEMFKDF…YRDPFGNPFA (122 aa)) is required for interaction with MYO6. The interval 663–671 (PPAVPARKG) is required for interaction with GRB2 and CSK. S675, S723, and S729 each carry phosphoserine. The sufficient for interaction with SH3KBP1 SH3 domain stretch occupies residues 709–725 (NKINEPPKPAPRQVSLP). The interval 742–770 (SFGSSQASVASSQPVSSEMYRDPFGNPFA) is disordered. Residues 745-758 (SSQASVASSQPVSS) show a composition bias toward low complexity.

As to quaternary structure, interacts (via NPXY motif) with DAB2 (via PID domain). Can interact (via PID domain) with LDLR, APP, APLP1 and APLP2, and weakly with INPP5D (via NPXY motifs); the interaction is impaired by tyrosine phosphorylation of the respective NPXY motifs. Can weakly interact (via PID domain) with LRP1 (via NPXY motif); the interaction is enhanced by tyrosine phosphorylation of the NPXY motif. Interacts with LRP2 (via NPXY motif); the interaction is not affected by tyrosine phosphorylation of the NPXY motif. Interacts with clathrin; in vitro can assemble clathrin triskelia into polyhedral coats. Interacts with AP2A2, ITGB1, ITGB3, ITGB5, PIAS2, DAB2IP, NOSTRIN, FCHO1, DVL3, EPS15, ITSN1 and EPS15L1. Interacts with SH3KBP1 (via SH3 domains). Interacts with GRB2; competes with SOS1 for binding to GRB2 and the interaction is enhanced by EGF and NT-3 stimulation. Interacts with MAP3K7; the interaction is induced by TGF-beta stimulation and may mediate TGF-beta stimulated JNK activation. Interacts with AXIN1 and PPP1CA; the interactions are mutually exclusive. Interacts with the globular tail of MYO6. Interacts (via DPF motifs) with FCHO2; the interaction is direct and required for DAB2-mediated LDLR endocytosis. Interacts with LRP6; the interaction involves LRP6 phosphorylation by CK2 and sequesters LRP6 towards clathrin-mediated endocytosis. Associates with the TGF-beta receptor complex. Interacts with SMAD2 and SMAD3; the interactions are enhanced upon TGF-beta stimulation. Interacts with GRB2; the interaction is enhanced by EGF and NT-3 stimulation. Interacts with SRC; the interaction is enhanced by EGF stimulation. Post-translationally, phosphorylated. Phosphorylation during mitosis is leading to membrane displacement. In terms of tissue distribution, expressed in deep invaginations, inclusion cysts and the surface epithelial cells of the ovary. Also expressed in breast epithelial cells, spleen, thymus, prostate, testis, macrophages, fibroblasts, lung epithelial cells, placenta, brain stem, heart and small intestine. Expressed in kidney proximal tubular epithelial cells (at protein level).

The protein resides in the cytoplasm. The protein localises to the cytoplasmic vesicle. Its subcellular location is the clathrin-coated vesicle membrane. It is found in the membrane. It localises to the clathrin-coated pit. In terms of biological role, adapter protein that functions as a clathrin-associated sorting protein (CLASP) required for clathrin-mediated endocytosis of selected cargo proteins. Can bind and assemble clathrin, and binds simultaneously to phosphatidylinositol 4,5-bisphosphate (PtdIns(4,5)P2) and cargos containing non-phosphorylated NPXY internalization motifs, such as the LDL receptor, to recruit them to clathrin-coated pits. Can function in clathrin-mediated endocytosis independently of the AP-2 complex. Involved in endocytosis of integrin beta-1; this function seems to redundant with the AP-2 complex and seems to require DAB2 binding to endocytosis accessory EH domain-containing proteins such as EPS15, EPS15L1 and ITSN1. Involved in endocytosis of cystic fibrosis transmembrane conductance regulator/CFTR. Involved in endocytosis of megalin/LRP2 lipoprotein receptor during embryonal development. Required for recycling of the TGF-beta receptor. Involved in CFTR trafficking to the late endosome. Involved in several receptor-mediated signaling pathways. Involved in TGF-beta receptor signaling and facilitates phosphorylation of the signal transducer SMAD2. Mediates TFG-beta-stimulated JNK activation. May inhibit the canoniocal Wnt/beta-catenin signaling pathway by stabilizing the beta-catenin destruction complex through a competing association with axin preventing its dephosphorylation through protein phosphatase 1 (PP1). Sequesters LRP6 towards clathrin-mediated endocytosis, leading to inhibition of Wnt/beta-catenin signaling. May activate non-canonical Wnt signaling. In cell surface growth factor/Ras signaling pathways proposed to inhibit ERK activation by interrupting the binding of GRB2 to SOS1 and to inhibit SRC by preventing its activating phosphorylation at 'Tyr-419'. Proposed to be involved in modulation of androgen receptor (AR) signaling mediated by SRC activation; seems to compete with AR for interaction with SRC. Plays a role in the CSF-1 signal transduction pathway. Plays a role in cellular differentiation. Involved in cell positioning and formation of visceral endoderm (VE) during embryogenesis and proposed to be required in the VE to respond to Nodal signaling coming from the epiblast. Required for the epithelial to mesenchymal transition, a process necessary for proper embryonic development. May be involved in myeloid cell differentiation and can induce macrophage adhesion and spreading. May act as a tumor suppressor. In Homo sapiens (Human), this protein is Disabled homolog 2 (DAB2).